Consider the following 123-residue polypeptide: UPF0382 membrane protein YwdK (123 aa).

Helical transmembrane passes span 3–23 (VFII…AFGA), 49–69 (ALGL…GSVT), 71–91 (AGWL…ILSV), and 96–116 (ILGA…IMIV).

The protein belongs to the UPF0382 family.

The protein localises to the cell membrane. In Bacillus subtilis (strain 168), this protein is UPF0382 membrane protein YwdK (ywdK).